The following is a 67-amino-acid chain: Bowman-Birk type major trypsin inhibitor (67 aa).

5 disulfide bridges follow: Cys8/Cys63, Cys9/Cys24, Cys14/Cys22, Cys31/Cys38, and Cys35/Cys51.

Belongs to the Bowman-Birk serine protease inhibitor family.

The sequence is that of Bowman-Birk type major trypsin inhibitor from Setaria italica (Foxtail millet).